The primary structure comprises 570 residues: Low-affinity glucose transporter HXT1 (570 aa).

Positions M1–E20 are enriched in polar residues. Residues M1 to A51 form a disordered region. Residues M1–G60 lie on the Cytoplasmic side of the membrane. Phosphoserine is present on residues S23, S38, and S44. A compositionally biased stretch (basic and acidic residues) spans G34–L43. The chain crosses the membrane as a helical span at residues V61–W81. Residues D82–G116 are Extracellular-facing. A helical membrane pass occupies residues L117–G137. Residues D138–R143 lie on the Cytoplasmic side of the membrane. The helical transmembrane segment at I144–I164 threads the bilayer. Residues N165–R174 are Extracellular-facing. A helical transmembrane segment spans residues I175–V195. Residues A196–R201 lie on the Cytoplasmic side of the membrane. The helical transmembrane segment at G202 to T222 threads the bilayer. The Extracellular segment spans residues N223 to R236. An N-linked (GlcNAc...) asparagine glycan is attached at N228. The chain crosses the membrane as a helical span at residues V237–P257. Residues E258 to D340 are Cytoplasmic-facing. A helical membrane pass occupies residues N341 to S357. The Extracellular portion of the chain corresponds to D358 to S363. Residues I364–V381 traverse the membrane as a helical segment. Topologically, residues D382–N388 are cytoplasmic. A helical transmembrane segment spans residues C389–V409. Residues T410–V431 are Extracellular-facing. Residues F432–I452 traverse the membrane as a helical segment. The Cytoplasmic portion of the chain corresponds to S453–S469. The chain crosses the membrane as a helical span at residues A470–I490. Position 491 (N491) is a topological domain, extracellular. Residues F492–F512 form a helical membrane-spanning segment. Residues V513–K570 are Cytoplasmic-facing.

This sequence belongs to the major facilitator superfamily. Sugar transporter (TC 2.A.1.1) family.

The protein localises to the membrane. Low-affinity glucose transporter. HXT1 is as well involved in the transport of mannose. The chain is Low-affinity glucose transporter HXT1 (HXT1) from Saccharomyces cerevisiae (strain ATCC 204508 / S288c) (Baker's yeast).